The primary structure comprises 417 residues: Histidine biosynthesis bifunctional protein his7 (417 aa).

The segment at 225-299 is phosphoribosyl-AMP cyclohydrolase; it reads GLVYSSKESV…HLDTLHCFGQ (75 aa). Positions 303–387 are phosphoribosyl-ATP pyrophosphohydrolase; the sequence is LCQLEKTLID…ISRHLDLKHR (85 aa).

It localises to the cytoplasm. It carries out the reaction 1-(5-phospho-beta-D-ribosyl)-5'-AMP + H2O = 1-(5-phospho-beta-D-ribosyl)-5-[(5-phospho-beta-D-ribosylamino)methylideneamino]imidazole-4-carboxamide. It catalyses the reaction 1-(5-phospho-beta-D-ribosyl)-ATP + H2O = 1-(5-phospho-beta-D-ribosyl)-5'-AMP + diphosphate + H(+). It participates in amino-acid biosynthesis; L-histidine biosynthesis; L-histidine from 5-phospho-alpha-D-ribose 1-diphosphate: step 2/9. It functions in the pathway amino-acid biosynthesis; L-histidine biosynthesis; L-histidine from 5-phospho-alpha-D-ribose 1-diphosphate: step 3/9. The sequence is that of Histidine biosynthesis bifunctional protein his7 from Schizosaccharomyces pombe (strain 972 / ATCC 24843) (Fission yeast).